Consider the following 130-residue polypeptide: Small ribosomal subunit protein uS9 (130 aa).

The protein belongs to the universal ribosomal protein uS9 family.

The polypeptide is Small ribosomal subunit protein uS9 (Caldicellulosiruptor bescii (strain ATCC BAA-1888 / DSM 6725 / KCTC 15123 / Z-1320) (Anaerocellum thermophilum)).